We begin with the raw amino-acid sequence, 191 residues long: Cytochrome c oxidase subunit 6b-1 (191 aa).

A compositionally biased stretch (polar residues) spans 1–14; it reads MADAVNAQTPSLSE. The segment at 1-126 is disordered; the sequence is MADAVNAQTP…IKLETAPADF (126 aa). The residue at position 2 (alanine 2) is an N-acetylalanine. 2 stretches are compositionally biased toward basic and acidic residues: residues 16–37 and 45–56; these read YHLEKEVKQDTSAKPVEVKEVA and EEVKTEQAKEES. Residues 72–98 show a composition bias toward low complexity; it reads APESTEVASEAPAAAEDNAEETPAAAE. Acidic residues predominate over residues 99–114; the sequence is ENNDENASEEVAEETP. One can recognise a CHCH domain in the interval 134–177; it reads TRHCFTRYVEYHRCVAAKGDDAPECDKFAKFYRSLCPSEWVDRW. Positions 137–147 match the Cx9C motif motif; sequence CFTRYVEYHRC. 2 disulfides stabilise this stretch: cysteine 137–cysteine 169 and cysteine 147–cysteine 158. Positions 158–169 match the Cx10C motif motif; sequence CDKFAKFYRSLC.

It belongs to the cytochrome c oxidase subunit 6B (TC 3.D.4.8) family. As to expression, expressed in the whole plant.

It localises to the mitochondrion. Its function is as follows. This protein is one of the nuclear-coded polypeptide chains of cytochrome c oxidase, the terminal oxidase in mitochondrial electron transport. This protein may be one of the heme-binding subunits of the oxidase. The polypeptide is Cytochrome c oxidase subunit 6b-1 (COX6B-1) (Arabidopsis thaliana (Mouse-ear cress)).